Consider the following 62-residue polypeptide: Large ribosomal subunit protein bL35 (62 aa).

The tract at residues 31 to 62 (HLAQNKTTKQKRQSRKSAQMHSSDLKRFKALI) is disordered. A compositionally biased stretch (basic and acidic residues) spans 53–62 (SDLKRFKALI).

This sequence belongs to the bacterial ribosomal protein bL35 family.

This chain is Large ribosomal subunit protein bL35, found in Mycoplasmopsis agalactiae (strain NCTC 10123 / CIP 59.7 / PG2) (Mycoplasma agalactiae).